We begin with the raw amino-acid sequence, 121 residues long: Small ribosomal subunit protein uS13 (121 aa).

A disordered region spans residues 97-121 (VRGQRTRTNARTRRGARKTVAGRKK). Residues 100–121 (QRTRTNARTRRGARKTVAGRKK) are compositionally biased toward basic residues.

Belongs to the universal ribosomal protein uS13 family. Part of the 30S ribosomal subunit. Forms a loose heterodimer with protein S19. Forms two bridges to the 50S subunit in the 70S ribosome.

Functionally, located at the top of the head of the 30S subunit, it contacts several helices of the 16S rRNA. In the 70S ribosome it contacts the 23S rRNA (bridge B1a) and protein L5 of the 50S subunit (bridge B1b), connecting the 2 subunits; these bridges are implicated in subunit movement. Contacts the tRNAs in the A and P-sites. The polypeptide is Small ribosomal subunit protein uS13 (Prochlorococcus marinus (strain NATL1A)).